The following is a 210-amino-acid chain: MATRSKSSQRWLKEHFSDPFVKKAQAEGMRSRAAYKLEELLERDRLLKPHMVVVDLGAAPGGWSQQVRRQIGDTGRVLALDILDMPPLAGVEFLHGDFREEAVLSQFEAMLGDQPVDLVLSDMAPNKSGVGAVDQPRMMHLAELALDFADNHLKTGGAFLIKLFQGEGFDDYVRDMRRRYDKVSIRKPEASRKRSPEVYALGQGKRAHMK.

Positions 61, 63, 81, 97, and 122 each coordinate S-adenosyl-L-methionine. K162 (proton acceptor) is an active-site residue. A compositionally biased stretch (basic and acidic residues) spans 187-196; sequence KPEASRKRSP. Positions 187-210 are disordered; the sequence is KPEASRKRSPEVYALGQGKRAHMK.

It belongs to the class I-like SAM-binding methyltransferase superfamily. RNA methyltransferase RlmE family.

Its subcellular location is the cytoplasm. The enzyme catalyses uridine(2552) in 23S rRNA + S-adenosyl-L-methionine = 2'-O-methyluridine(2552) in 23S rRNA + S-adenosyl-L-homocysteine + H(+). Its function is as follows. Specifically methylates the uridine in position 2552 of 23S rRNA at the 2'-O position of the ribose in the fully assembled 50S ribosomal subunit. This Stenotrophomonas maltophilia (strain K279a) protein is Ribosomal RNA large subunit methyltransferase E.